An 80-amino-acid polypeptide reads, in one-letter code: Cell division activator CedA (80 aa).

This sequence belongs to the CedA family.

Functionally, activates the cell division inhibited by chromosomal DNA over-replication. The chain is Cell division activator CedA from Salmonella choleraesuis (strain SC-B67).